A 511-amino-acid polypeptide reads, in one-letter code: MLLVDVAGASADVAASSARLAKIARIAELLRRAGREDVAIVVSWLSGELTQRQIGVGWASLRSVPAAAAEPTLTVAEVERRFGEIGATAGRGSQARRAQLLADLFSAATDVEQTFLRRLLTGELRQGALVGVMADAVAKAADLPAATVRRAAMLGGDLPAVAAAALTDGDAGLAQFTLQAGKAVGPMLAQTAADVTDALDRLGGTAMFEAKLDGARVQIHRRGDSVSIFTRSLDDVTARLPEVVEATLALPVTDLIADAEAIALRPDGRPHRFQVTASRFGRRGGTSDTASNPLSVFFFDLLHVDGVDLLDAPAHERIARLDAVTPDSQRVDRLVTSDPGAAQEFFDRTLAAGHEGVMAKSTVAPYEAGRRGAGWLKVKPVHTLDLVVLAVEWGSGRRSGKLSNIHLGARDPGTGGFVMLGKTFKGMTDEMLAWQTRRFLDLADGDATDHYVVKVRPEQVVEIAFDGLQTSTRYPGGMALRFARVVRYRDDKAATDADTIDTVREIYERGN.

ATP is bound at residue glutamate 209. The active-site N6-AMP-lysine intermediate is lysine 211. ATP contacts are provided by arginine 216, arginine 231, glutamate 260, phenylalanine 299, arginine 371, and lysine 377.

The protein belongs to the ATP-dependent DNA ligase family. Mg(2+) is required as a cofactor.

The catalysed reaction is ATP + (deoxyribonucleotide)n-3'-hydroxyl + 5'-phospho-(deoxyribonucleotide)m = (deoxyribonucleotide)n+m + AMP + diphosphate.. DNA ligase that seals nicks in double-stranded DNA during DNA replication, DNA recombination and DNA repair. The protein is Probable DNA ligase of Mycolicibacterium gilvum (strain PYR-GCK) (Mycobacterium gilvum (strain PYR-GCK)).